A 62-amino-acid chain; its full sequence is MLFKSLQSISSVKSVSQKSQLTNTINSTQFGSNSNQLLAVAACIDLNLAPLLSAHIDAFISL.

This Dictyostelium discoideum (Social amoeba) protein is Protein sigN176.